The following is a 188-amino-acid chain: MNPNMNMMPMSGPQMMQVMQSSPSGPPGPVQHQQQQPPQPLQQQQQAEKLDNISRVKSLLGPLRESMFLTIRSSAFALQQNNLADNLKRDTGAHHVPRFDKHLEDFYACCDQIEIHLKTAMQCLQQQNSSNHYLPGPVTPMRMETFMPDNAGPISYPTYLNTVRVHIQSAKDIHDTLISAAQNISQAD.

Composition is skewed to low complexity over residues 1–23 and 30–43; these read MNPN…QSSP and VQHQ…PLQQ. The interval 1–43 is disordered; that stretch reads MNPNMNMMPMSGPQMMQVMQSSPSGPPGPVQHQQQQPPQPLQQ.

The protein belongs to the Mediator complex subunit 29 family. As to quaternary structure, component of the Mediator complex. Self-associates. Interacts with dsx.

The protein localises to the nucleus. Functionally, component of the Mediator complex, a coactivator involved in the regulated transcription of nearly all RNA polymerase II-dependent genes. Mediator functions as a bridge to convey information from gene-specific regulatory proteins to the basal RNA polymerase II transcription machinery. Mediator is recruited to promoters by direct interactions with regulatory proteins and serves as a scaffold for the assembly of a functional preinitiation complex with RNA polymerase II and the general transcription factors. Required for female somatic sexual development. The protein is Mediator of RNA polymerase II transcription subunit 29 (ix) of Drosophila melanogaster (Fruit fly).